Consider the following 251-residue polypeptide: Regulator of G-protein signaling 9-binding protein C (251 aa).

Over 1–230 (MPLQNVKVAD…NSKGCCSDGQ (230 aa)) the chain is Cytoplasmic. 2 coiled-coil regions span residues 53 to 94 (LRDE…ELER) and 158 to 187 (ANKA…MKVN). Residues 231–250 (LIVSLLLCGTALVAITLYSI) form a helical; Anchor for type IV membrane protein membrane-spanning segment. Leu-251 is a topological domain (extracellular).

The protein belongs to the RGS7BP/RGS9BP family.

It localises to the membrane. In terms of biological role, regulator of G protein-coupled receptor (GPCR) signaling. Probably acts by regulating the activity of some 'R7' family protein (RGS6, RGS7, RGS9 and/or RGS11). The chain is Regulator of G-protein signaling 9-binding protein C (rgs9bp-c) from Xenopus laevis (African clawed frog).